Consider the following 487-residue polypeptide: Cysteine--tRNA ligase (487 aa).

Position 29 (C29) interacts with Zn(2+). A 'HIGH' region motif is present at residues 31–41 (VTVYDYNHVGH). Zn(2+)-binding residues include C209, H234, and E238. Residues 266 to 270 (KMSKS) carry the 'KMSKS' region motif. Position 269 (K269) interacts with ATP.

This sequence belongs to the class-I aminoacyl-tRNA synthetase family. As to quaternary structure, monomer. Requires Zn(2+) as cofactor.

Its subcellular location is the cytoplasm. It catalyses the reaction tRNA(Cys) + L-cysteine + ATP = L-cysteinyl-tRNA(Cys) + AMP + diphosphate. This Sulfurihydrogenibium sp. (strain YO3AOP1) protein is Cysteine--tRNA ligase.